We begin with the raw amino-acid sequence, 128 residues long: Arginine decarboxylase proenzyme (128 aa).

Residue S76 is the Schiff-base intermediate with substrate; via pyruvic acid of the active site. At S76 the chain carries Pyruvic acid (Ser); by autocatalysis. Catalysis depends on H81, which acts as the Proton acceptor; for processing activity. Catalysis depends on C96, which acts as the Proton donor; for catalytic activity.

It belongs to the prokaryotic AdoMetDC family. Type 1 subfamily. In terms of assembly, heterooctamer of four alpha and four beta chains arranged as a tetramer of alpha/beta heterodimers. The cofactor is pyruvate. In terms of processing, is synthesized initially as an inactive proenzyme. Formation of the active enzyme involves a self-maturation process in which the active site pyruvoyl group is generated from an internal serine residue via an autocatalytic post-translational modification. Two non-identical subunits are generated from the proenzyme in this reaction, and the pyruvate is formed at the N-terminus of the alpha chain, which is derived from the carboxyl end of the proenzyme. The post-translation cleavage follows an unusual pathway, termed non-hydrolytic serinolysis, in which the side chain hydroxyl group of the serine supplies its oxygen atom to form the C-terminus of the beta chain, while the remainder of the serine residue undergoes an oxidative deamination to produce ammonia and the pyruvoyl group blocking the N-terminus of the alpha chain.

The catalysed reaction is L-arginine + H(+) = agmatine + CO2. The protein operates within amine and polyamine biosynthesis; agmatine biosynthesis; agmatine from L-arginine: step 1/1. Specifically catalyzes the decarboxylation of L-arginine to agmatine. Has no S-adenosylmethionine decarboxylase (AdoMetDC) activity. The polypeptide is Arginine decarboxylase proenzyme (Sulfurisphaera tokodaii (strain DSM 16993 / JCM 10545 / NBRC 100140 / 7) (Sulfolobus tokodaii)).